We begin with the raw amino-acid sequence, 221 residues long: Catechol O-methyltransferase (221 aa).

Positions 41, 65, 67, 71, 89, 94, 118, and 139 each coordinate S-adenosyl-L-methionine. Asp139, Asp165, and Asn166 together coordinate Mg(2+).

The protein belongs to the class I-like SAM-binding methyltransferase superfamily. Cation-dependent O-methyltransferase family. Homodimer. Mg(2+) serves as cofactor.

The catalysed reaction is a catechol + S-adenosyl-L-methionine = a guaiacol + S-adenosyl-L-homocysteine + H(+). The metal ion affects the meta and para-regiospecificity of the enzyme as well as the enzyme activity and thermal stability. Catechol O-methyltransferase that can use various catechol-like compounds. Can produce vanillic acid (meta-form) and iso-vanillic acid (para-form) from protocatechuic acid (PCA). Does not have a regiospecificity, and produces the meta- and para-forms of the products in equal proportion. This is Catechol O-methyltransferase from Niastella koreensis (strain DSM 17620 / KACC 11465 / NBRC 106392 / GR20-10).